Reading from the N-terminus, the 344-residue chain is Aromatic amino acid aminotransferase (344 aa).

The residue at position 213 (lysine 213) is an N6-(pyridoxal phosphate)lysine.

It belongs to the class-II pyridoxal-phosphate-dependent aminotransferase family. Homodimer. Requires pyridoxal 5'-phosphate as cofactor.

It carries out the reaction an aromatic L-alpha-amino acid + 2-oxoglutarate = an aromatic oxo-acid + L-glutamate. Aminotransferase that catalyzes the conversion of aromatic amino acids and 2-oxoglutarate into corresponding aromatic oxo acids and L-glutamate. The protein is Aromatic amino acid aminotransferase of Corynebacterium diphtheriae (strain ATCC 700971 / NCTC 13129 / Biotype gravis).